The chain runs to 218 residues: Cold-regulated protein 28 (218 aa).

Disordered stretches follow at residues 1–51 and 166–218; these read MEND…ADSK and TKHS…KPRT. Low complexity predominate over residues 20 to 37; that stretch reads EASAESQSESTLSNSLDS. Residues 186 to 207 are compositionally biased toward basic and acidic residues; the sequence is GEVSKKREREANNDDSSLKEDQ.

Its subcellular location is the nucleus. Together with COR27, involved in central circadian clock regulation and in flowering promotion, by binding to the chromatin of clock-associated evening genes TOC1, PRR5, ELF4 and cold-responsive genes in order to repress their transcription. Negative regulator of freezing tolerance. The chain is Cold-regulated protein 28 from Arabidopsis thaliana (Mouse-ear cress).